We begin with the raw amino-acid sequence, 269 residues long: MNQMNPAFVMPDVQSTVDTRQIPIQRVGVKAVRHPLTVCTESGDVQPSVGVWNLDVRLPADQKGTHMSRFVALLEENRAPLTVERFRAMLASMLEKLEAQAGRIEVTFPYFVNKTAPVSGVQSLLDYEVTLAGESRDGHTRVFLKVLVPVTSLCPCSKKISQYGAHNQRSHVTIDAELAGDLPVEALIRIAEEEASCELWGLLKRPDEKFVTERAYENPKFVEDLVRDVAQRLDADERVIAYVLEAENFESIHNHSAYALIERDKRLAA.

This sequence belongs to the GTP cyclohydrolase IV family.

It carries out the reaction GTP + H2O = 7,8-dihydroneopterin 3'-triphosphate + formate + H(+). The protein operates within cofactor biosynthesis; 7,8-dihydroneopterin triphosphate biosynthesis; 7,8-dihydroneopterin triphosphate from GTP: step 1/1. In terms of biological role, converts GTP to 7,8-dihydroneopterin triphosphate. The protein is GTP cyclohydrolase FolE2 of Burkholderia vietnamiensis (strain G4 / LMG 22486) (Burkholderia cepacia (strain R1808)).